The primary structure comprises 120 residues: Large ribosomal subunit protein uL18 (120 aa).

This sequence belongs to the universal ribosomal protein uL18 family. As to quaternary structure, part of the 50S ribosomal subunit; part of the 5S rRNA/L5/L18/L25 subcomplex. Contacts the 5S and 23S rRNAs.

This is one of the proteins that bind and probably mediate the attachment of the 5S RNA into the large ribosomal subunit, where it forms part of the central protuberance. The polypeptide is Large ribosomal subunit protein uL18 (Paramagnetospirillum magneticum (strain ATCC 700264 / AMB-1) (Magnetospirillum magneticum)).